Consider the following 882-residue polypeptide: Isoamylase 2, chloroplastic (882 aa).

A chloroplast-targeting transit peptide spans methionine 1–cysteine 70.

The protein belongs to the glycosyl hydrolase 13 family. As to quaternary structure, associates with ISA1 to form the heteromultimeric complex Iso1 required for amylopectin synthesis.

It localises to the plastid. Its subcellular location is the chloroplast. The protein operates within glycan biosynthesis; starch biosynthesis. In terms of biological role, involved in the trimming of pre-amylopectin chains. Accelerates the crystallization of nascent amylopectin molecules during starch synthesis. ISA1 and ISA2 work exclusively together as a multimeric holoenzyme. ISA1-ISA2 removes preferentially branches that are very close to other branches. The polypeptide is Isoamylase 2, chloroplastic (ISA2) (Arabidopsis thaliana (Mouse-ear cress)).